A 234-amino-acid polypeptide reads, in one-letter code: Leucyl/phenylalanyl-tRNA--protein transferase (234 aa).

The protein belongs to the L/F-transferase family.

Its subcellular location is the cytoplasm. It carries out the reaction N-terminal L-lysyl-[protein] + L-leucyl-tRNA(Leu) = N-terminal L-leucyl-L-lysyl-[protein] + tRNA(Leu) + H(+). The catalysed reaction is N-terminal L-arginyl-[protein] + L-leucyl-tRNA(Leu) = N-terminal L-leucyl-L-arginyl-[protein] + tRNA(Leu) + H(+). The enzyme catalyses L-phenylalanyl-tRNA(Phe) + an N-terminal L-alpha-aminoacyl-[protein] = an N-terminal L-phenylalanyl-L-alpha-aminoacyl-[protein] + tRNA(Phe). Functions in the N-end rule pathway of protein degradation where it conjugates Leu, Phe and, less efficiently, Met from aminoacyl-tRNAs to the N-termini of proteins containing an N-terminal arginine or lysine. The protein is Leucyl/phenylalanyl-tRNA--protein transferase of Hahella chejuensis (strain KCTC 2396).